Reading from the N-terminus, the 359-residue chain is Putative cyclin-F1-2 (359 aa).

This sequence belongs to the cyclin family. Cyclin F subfamily.

This chain is Putative cyclin-F1-2 (CYCF1-2), found in Oryza sativa subsp. japonica (Rice).